The chain runs to 186 residues: Casparian strip membrane protein 5 (186 aa).

Over 1 to 25 (MKTDAIELGVAKDSTPIGGANRGVS) the chain is Cytoplasmic. Residues 26–46 (ILDFILRLVALVGTLASAILM) traverse the membrane as a helical segment. The Extracellular segment spans residues 47 to 73 (GTTNETLPFATQFIRFRAEYDDLPTFT). Asparagine 50 carries N-linked (GlcNAc...) asparagine glycosylation. A helical membrane pass occupies residues 74 to 94 (FFVVANIVVSGYLLLSLPLSI). Over 95–106 (VNIVRSTAKNRR) the chain is Cytoplasmic. Residues 107–127 (IILIIFDTAMLALLTAGASAA) traverse the membrane as a helical segment. Residues 128 to 156 (AAIVYLAHKGNTRANWFAICQQFNSFCER) lie on the Extracellular side of the membrane. The chain crosses the membrane as a helical span at residues 157–177 (ISGSLIGSFVGVAVFILLILM). Residues 178 to 186 (SASALSRRN) lie on the Cytoplasmic side of the membrane.

This sequence belongs to the Casparian strip membrane proteins (CASP) family. As to quaternary structure, homodimer and heterodimers.

Its subcellular location is the cell membrane. Its function is as follows. Regulates membrane-cell wall junctions and localized cell wall deposition. Required for establishment of the Casparian strip membrane domain (CSD) and the subsequent formation of Casparian strips, a cell wall modification of the root endodermis that determines an apoplastic barrier between the intraorganismal apoplasm and the extraorganismal apoplasm and prevents lateral diffusion. In Ricinus communis (Castor bean), this protein is Casparian strip membrane protein 5.